Consider the following 199-residue polypeptide: FMN-dependent NADH:quinone oxidoreductase (199 aa).

Residues 17–19 (SNS) and 87–90 (MYNF) each bind FMN.

The protein belongs to the azoreductase type 1 family. Homodimer. FMN is required as a cofactor.

The catalysed reaction is 2 a quinone + NADH + H(+) = 2 a 1,4-benzosemiquinone + NAD(+). It carries out the reaction N,N-dimethyl-1,4-phenylenediamine + anthranilate + 2 NAD(+) = 2-(4-dimethylaminophenyl)diazenylbenzoate + 2 NADH + 2 H(+). Quinone reductase that provides resistance to thiol-specific stress caused by electrophilic quinones. Its function is as follows. Also exhibits azoreductase activity. Catalyzes the reductive cleavage of the azo bond in aromatic azo compounds to the corresponding amines. This chain is FMN-dependent NADH:quinone oxidoreductase, found in Mycoplasma mycoides subsp. mycoides SC (strain CCUG 32753 / NCTC 10114 / PG1).